We begin with the raw amino-acid sequence, 348 residues long: MKNLLGCSVKDLEKIALNYGQAAFRGRQIYNWLYNYKNRSKSIDEINVLPLKFRDQLKNEAFLFGELTLKEKYLATDGTLKLLLNTRDNESVECVGIPTEKRLTACLSSQVGCPMDCKFCATGKEGLKRSLKVSEILDQILFIENQMNQKVSNIVFMGMGEPLLNIDELLLSIRSINEDFAISQRKITVSTVAIPKMISKLSELSFQVLGKCQFTLAISLHASNQKIREAIIPSAKNYHIKNIIDDCREYVRETGRRVSFEYLMLHGVNDKLEHADELSNLIKGFQCHVNLIQYNHIEEVEFKQTPIKNAQLFQTRLSNSGINVSFRKSRGSDRNAACGQLRQNDKIK.

Residue Glu-93 is the Proton acceptor of the active site. The Radical SAM core domain occupies 99–323; sequence TEKRLTACLS…QTRLSNSGIN (225 aa). A disulfide bridge links Cys-106 with Cys-338. 3 residues coordinate [4Fe-4S] cluster: Cys-113, Cys-117, and Cys-120. S-adenosyl-L-methionine contacts are provided by residues 160 to 161, Ser-190, 219 to 221, and Asn-295; these read GE and SLH. Cys-338 serves as the catalytic S-methylcysteine intermediate.

It belongs to the radical SAM superfamily. RlmN family. [4Fe-4S] cluster serves as cofactor.

Its subcellular location is the cytoplasm. The enzyme catalyses adenosine(2503) in 23S rRNA + 2 reduced [2Fe-2S]-[ferredoxin] + 2 S-adenosyl-L-methionine = 2-methyladenosine(2503) in 23S rRNA + 5'-deoxyadenosine + L-methionine + 2 oxidized [2Fe-2S]-[ferredoxin] + S-adenosyl-L-homocysteine. It carries out the reaction adenosine(37) in tRNA + 2 reduced [2Fe-2S]-[ferredoxin] + 2 S-adenosyl-L-methionine = 2-methyladenosine(37) in tRNA + 5'-deoxyadenosine + L-methionine + 2 oxidized [2Fe-2S]-[ferredoxin] + S-adenosyl-L-homocysteine. Functionally, specifically methylates position 2 of adenine 2503 in 23S rRNA and position 2 of adenine 37 in tRNAs. This chain is Probable dual-specificity RNA methyltransferase RlmN, found in Prochlorococcus marinus subsp. pastoris (strain CCMP1986 / NIES-2087 / MED4).